The following is a 1040-amino-acid chain: Multidrug resistance protein MdtB (1040 aa).

Helical transmembrane passes span 16 to 36, 347 to 367, 369 to 389, 396 to 416, 440 to 460, 472 to 492, 537 to 557, 863 to 883, 888 to 908, 911 to 931, 968 to 988, and 998 to 1018; these read FIMRPVATTLLMVAILLAGII, LMMAIALVVMIIYLFLRNIPA, IIPGVAVPLSLIGTFAVMVFL, LTLMALTIATGFVVDDAIVVI, IGFTIISLTFSLIAVLIPLLF, FAITLAVAILISAVVSLTLTP, WLTLSVALSTLLLSVLLWVFI, LGSTVWLIVAAVVAMYIVLGI, FIHPITILSTLPTAGVGALLA, IAGSELDVIAIIGIILLIGIV, ILMTTLAALLGALPLMLSTGV, and IGMVGGLIVSQVLTLFTTPVI.

Belongs to the resistance-nodulation-cell division (RND) (TC 2.A.6) family. MdtB subfamily. Part of a tripartite efflux system composed of MdtA, MdtB and MdtC. MdtB forms a heteromultimer with MdtC.

It is found in the cell inner membrane. The chain is Multidrug resistance protein MdtB from Shigella sonnei (strain Ss046).